We begin with the raw amino-acid sequence, 127 residues long: Large ribosomal subunit protein bL17 (127 aa).

The protein belongs to the bacterial ribosomal protein bL17 family. In terms of assembly, part of the 50S ribosomal subunit. Contacts protein L32.

The chain is Large ribosomal subunit protein bL17 from Levilactobacillus brevis (strain ATCC 367 / BCRC 12310 / CIP 105137 / JCM 1170 / LMG 11437 / NCIMB 947 / NCTC 947) (Lactobacillus brevis).